A 562-amino-acid polypeptide reads, in one-letter code: NAD-dependent malic enzyme (562 aa).

Residue Y101 is the Proton donor of the active site. R154 is an NAD(+) binding site. K172 functions as the Proton acceptor in the catalytic mechanism. A divalent metal cation contacts are provided by E243, D244, and D267. Residues D267 and N415 each contribute to the NAD(+) site.

This sequence belongs to the malic enzymes family. In terms of assembly, homotetramer. Mg(2+) serves as cofactor. Requires Mn(2+) as cofactor.

The enzyme catalyses (S)-malate + NAD(+) = pyruvate + CO2 + NADH. It carries out the reaction oxaloacetate + H(+) = pyruvate + CO2. This Shewanella pealeana (strain ATCC 700345 / ANG-SQ1) protein is NAD-dependent malic enzyme.